A 198-amino-acid polypeptide reads, in one-letter code: Endoribonuclease YbeY (198 aa).

Positions 156, 160, and 166 each coordinate Zn(2+).

The protein belongs to the endoribonuclease YbeY family. It depends on Zn(2+) as a cofactor.

Its subcellular location is the cytoplasm. Functionally, single strand-specific metallo-endoribonuclease involved in late-stage 70S ribosome quality control and in maturation of the 3' terminus of the 16S rRNA. This chain is Endoribonuclease YbeY, found in Cupriavidus necator (strain ATCC 17699 / DSM 428 / KCTC 22496 / NCIMB 10442 / H16 / Stanier 337) (Ralstonia eutropha).